The chain runs to 326 residues: Putative ribose-phosphate pyrophosphokinase 2 (326 aa).

ATP is bound by residues Asp-43–Glu-45 and Arg-102–Gln-103. Residue His-136 coordinates Mg(2+). D-ribose 5-phosphate contacts are provided by residues Asp-226 and Asn-230–Thr-234.

This sequence belongs to the ribose-phosphate pyrophosphokinase family. Class I subfamily. In terms of assembly, homohexamer. Requires Mg(2+) as cofactor.

The protein localises to the cytoplasm. It carries out the reaction D-ribose 5-phosphate + ATP = 5-phospho-alpha-D-ribose 1-diphosphate + AMP + H(+). It participates in metabolic intermediate biosynthesis; 5-phospho-alpha-D-ribose 1-diphosphate biosynthesis; 5-phospho-alpha-D-ribose 1-diphosphate from D-ribose 5-phosphate (route I): step 1/1. Involved in the biosynthesis of the central metabolite phospho-alpha-D-ribosyl-1-pyrophosphate (PRPP) via the transfer of pyrophosphoryl group from ATP to 1-hydroxyl of ribose-5-phosphate (Rib-5-P). This Streptococcus mutans serotype c (strain ATCC 700610 / UA159) protein is Putative ribose-phosphate pyrophosphokinase 2.